Here is a 38-residue protein sequence, read N- to C-terminus: Beta-galactosidase (38 aa).

Belongs to the glycosyl hydrolase 35 family. As to quaternary structure, heterodimer of a large and a small subunit. In terms of processing, the small subunit is N-glycosylated.

The catalysed reaction is Hydrolysis of terminal non-reducing beta-D-galactose residues in beta-D-galactosides.. Its function is as follows. Involved in cell wall degradation. Degrades polysaccharides containing beta-(1--&gt;4)-linked galactans, acting as an exo-(1--&gt;4)-beta-D-galactanase. This Hordeum vulgare (Barley) protein is Beta-galactosidase.